A 192-amino-acid chain; its full sequence is uncharacterized protein (192 aa).

A Nudix hydrolase domain is found at 29–160 (HRQAAVLIPI…PLDIYRRGDS (132 aa)). A Nudix box motif is present at residues 67–89 (GAVDDTDTSVIAAALREAEEEVA). Mg(2+) contacts are provided by E83 and E87.

The protein belongs to the Nudix hydrolase family. PCD1 subfamily. It depends on Mn(2+) as a cofactor. Mg(2+) is required as a cofactor.

Probably mediates the hydrolysis of some nucleoside diphosphate derivatives. This is an uncharacterized protein from Escherichia fergusonii (strain ATCC 35469 / DSM 13698 / CCUG 18766 / IAM 14443 / JCM 21226 / LMG 7866 / NBRC 102419 / NCTC 12128 / CDC 0568-73).